The primary structure comprises 186 residues: TATA-box-binding protein D (186 aa).

Tandem repeats lie at residues Ile-10–Leu-86 and Val-101–Leu-179.

The protein belongs to the TBP family.

Functionally, general factor that plays a role in the activation of archaeal genes transcribed by RNA polymerase. Binds specifically to the TATA box promoter element which lies close to the position of transcription initiation. This Halobacterium salinarum (strain ATCC 700922 / JCM 11081 / NRC-1) (Halobacterium halobium) protein is TATA-box-binding protein D (tbpD).